Consider the following 266-residue polypeptide: Putative carbamate hydrolase RutD (266 aa).

The AB hydrolase-1 domain occupies Pro14–Ala238.

It belongs to the AB hydrolase superfamily. Hydrolase RutD family.

It carries out the reaction carbamate + 2 H(+) = NH4(+) + CO2. Involved in pyrimidine catabolism. May facilitate the hydrolysis of carbamate, a reaction that can also occur spontaneously. The chain is Putative carbamate hydrolase RutD from Klebsiella pneumoniae (strain 342).